A 478-amino-acid polypeptide reads, in one-letter code: Catalase easC (478 aa).

Histidine 54 is an active-site residue. Tyrosine 343 is a binding site for heme. Residues 459–478 (VAEKARPDSPSRAQPGQLRL) are disordered.

This sequence belongs to the catalase family. The cofactor is heme.

The protein operates within alkaloid biosynthesis; ergot alkaloid biosynthesis. Catalase; part of the gene cluster that mediates the biosynthesis of fungal ergot alkaloid. DmaW catalyzes the first step of ergot alkaloid biosynthesis by condensing dimethylallyl diphosphate (DMAP) and tryptophan to form 4-dimethylallyl-L-tryptophan. The second step is catalyzed by the methyltransferase easF that methylates 4-dimethylallyl-L-tryptophan in the presence of S-adenosyl-L-methionine, resulting in the formation of 4-dimethylallyl-L-abrine. The catalase easC and the FAD-dependent oxidoreductase easE then transform 4-dimethylallyl-L-abrine to chanoclavine-I which is further oxidized by easD in the presence of NAD(+), resulting in the formation of chanoclavine-I aldehyde. Chanoclavine-I aldehyde is the precursor of ergoamides and ergopeptines in Clavicipitaceae, and clavine-type alcaloids such as fumiclavine in Trichocomaceae. However, the metabolites downstream of chanoclavine-I aldehyde in Arthrodermataceae have not been identified yet. This chain is Catalase easC, found in Arthroderma benhamiae (strain ATCC MYA-4681 / CBS 112371) (Trichophyton mentagrophytes).